The sequence spans 28 residues: Chassatide C12 (28 aa).

The segment at residues 1-28 (EYCGESCYLIPCFTPGCYCVSRQCVNKN) is a cross-link (cyclopeptide (Glu-Asn)). 3 cysteine pairs are disulfide-bonded: Cys3/Cys17, Cys7/Cys19, and Cys12/Cys24.

This is a cyclic peptide. In terms of tissue distribution, expressed in fruit, pedicel, leaf and stem but not in root (at protein level).

Probably participates in a plant defense mechanism. The sequence is that of Chassatide C12 from Chassalia chartacea (Chassalia curviflora).